A 946-amino-acid polypeptide reads, in one-letter code: Serine/threonine-protein kinase PLK4 (946 aa).

Residues 12 to 265 (FKVLNLLGKG…LSSVLDHAFM (254 aa)) form the Protein kinase domain. ATP-binding positions include 18–26 (LGKGSFACV) and Lys41. Asp136 serves as the catalytic Proton acceptor. Positions 330 to 395 (HPAERSNGGS…TYGKPSSFSE (66 aa)) are disordered. The span at 378–394 (RSGTSQSQTYGKPSSFS) shows a compositional bias: polar residues. The 114-residue stretch at 566-679 (TLRSIISPLN…AKFIQLVRSK (114 aa)) folds into the Cryptic POLO box 1 (CPB1) domain. The Cryptic POLO box 2 (CPB2) domain occupies 680–792 (MPKVTYYTRY…GRRPAITESP (113 aa)). The tract at residues 789–828 (TESPRTQLTVDSARERKDEQSSANRVLHSSATSPPQIPNI) is disordered. The span at 809–828 (SSANRVLHSSATSPPQIPNI) shows a compositional bias: polar residues. One can recognise a POLO box domain in the interval 864–942 (QVLKSVFVEN…LSSILMLFAS (79 aa)).

Belongs to the protein kinase superfamily. Ser/Thr protein kinase family. CDC5/Polo subfamily. In terms of assembly, homodimer. Ubiquitinated; leading to its degradation by the proteasome.

It localises to the cytoplasm. Its subcellular location is the cytoskeleton. The protein localises to the microtubule organizing center. The protein resides in the centrosome. It is found in the centriole. The enzyme catalyses L-seryl-[protein] + ATP = O-phospho-L-seryl-[protein] + ADP + H(+). It carries out the reaction L-threonyl-[protein] + ATP = O-phospho-L-threonyl-[protein] + ADP + H(+). Serine/threonine-protein kinase that plays a central role in centriole duplication. Able to trigger procentriole formation on the surface of the parental centriole cylinder, leading to the recruitment of centriole biogenesis proteins such as sass6, cpap, ccp110, cep135 and gamma-tubulin. When overexpressed, it is able to induce centrosome amplification through the simultaneous generation of multiple procentrioles adjoining each parental centriole during S phase. Its central role in centriole replication suggests a possible role in tumorigenesis, centrosome aberrations being frequently observed in tumors. Also involved in deuterosome-mediated centriole amplification in multiciliated that can generate more than 100 centrioles. This chain is Serine/threonine-protein kinase PLK4, found in Xenopus tropicalis (Western clawed frog).